A 188-amino-acid polypeptide reads, in one-letter code: Ribosome-recycling factor (188 aa).

This sequence belongs to the RRF family.

The protein localises to the cytoplasm. Responsible for the release of ribosomes from messenger RNA at the termination of protein biosynthesis. May increase the efficiency of translation by recycling ribosomes from one round of translation to another. This chain is Ribosome-recycling factor, found in Anaeromyxobacter sp. (strain K).